A 499-amino-acid chain; its full sequence is Ammonium transporter MEP2 (499 aa).

At 1 to 31 the chain is on the extracellular side; the sequence is MSYNFTGTPTGEGTGGNSLTTDLNTQFDLAN. Asn-4 is a glycosylation site (N-linked (GlcNAc...) asparagine). The helical transmembrane segment at 32–52 threads the bilayer; sequence MGWIGVASAGVWIMVPGIGLL. At 53-62 the chain is on the cytoplasmic side; it reads YSGLSRKKHA. Residues 63–83 form a helical membrane-spanning segment; it reads LSLLWASMMASAVCIFQWFFW. At 84 to 122 the chain is on the extracellular side; that stretch reads GYSLAFSHNTRGNGFIGTLEFFGFRNVLGAPSSVSSLPD. The chain crosses the membrane as a helical span at residues 123 to 143; it reads ILFAVYQGMFAAVTGALMLGG. The Cytoplasmic portion of the chain corresponds to 144-152; the sequence is ACERARLFP. A helical membrane pass occupies residues 153 to 173; the sequence is MMVFLFLWMTIVYCPIACWVW. The Extracellular portion of the chain corresponds to 174–187; it reads NAEGWLVKLGSLDY. A helical membrane pass occupies residues 188–208; the sequence is AGGLCVHLTSGHGGLVYALIL. Over 209–230 the chain is Cytoplasmic; that stretch reads GKRNDPVTRKGMPKYKPHSVTS. A helical membrane pass occupies residues 231–251; the sequence is VVLGTVFLWFGWMFFNGGSAG. The Extracellular portion of the chain corresponds to 252–257; that stretch reads NATIRA. A helical transmembrane segment spans residues 258–278; sequence WYSIMSTNLAAACGGLTWMVI. The Cytoplasmic segment spans residues 279-289; that stretch reads DYFRCGRKWTT. The helical transmembrane segment at 290-312 threads the bilayer; sequence VGLCSGIIAGLVGITPAAGFVPI. At 313-315 the chain is on the extracellular side; that stretch reads WSA. The chain crosses the membrane as a helical span at residues 316–338; sequence VVIGVVTGAGCNLAVDLKSLLRI. Residues 339 to 346 are Cytoplasmic-facing; that stretch reads DDGLDCYS. A helical membrane pass occupies residues 347–367; the sequence is IHGVGGCIGSVLTGIFAADYV. Residues 368–393 are Extracellular-facing; it reads NATAGSYISPIDGGWINHHYKQVGYQ. Residues 394-414 form a helical membrane-spanning segment; it reads LAGICAALAWTVTVTSILLLT. Residues 415 to 499 lie on the Cytoplasmic side of the membrane; the sequence is MNAIPFLKLR…SSTKNTDHIV (85 aa). Positions 428–441 are enhancer domain; the sequence is DEEELGTDAAQIGE. Residues 442–449 form a linker domain region; the sequence is FTYEESTA. The interval 450-485 is autoinhibitory domain; sequence YIPEPIRSKTSAQMPPPHENIDDKIVGNTDAEKNST. The interval 455–499 is disordered; the sequence is IRSKTSAQMPPPHENIDDKIVGNTDAEKNSTPSDASSTKNTDHIV. Ser-457 is subject to Phosphoserine. Over residues 468–482 the composition is skewed to basic and acidic residues; it reads ENIDDKIVGNTDAEK. Residues 483–493 show a composition bias toward polar residues; that stretch reads NSTPSDASSTK.

The protein belongs to the ammonia transporter channel (TC 1.A.11.2) family. Post-translationally, phosphorylated at Ser-457 by the TORC1 effector kinase NPR1 under nitrogen-limiting conditions which causes a conformational change in the C-terminal region (CTR) to form an open active conformation. Supplementation of nitrogen source leads to inactivation and instant Ser-457 dephosphorylation via plasma membrane PSR1 and PSR2 redundant phosphatases. The residue Asn-4 of the protein's N-terminal tail is the only site that is glycosylated.

It localises to the cell membrane. Transporter for ammonium (both charged and uncharged NH3 and NH4) to use as a nitrogen source. The affinity of MEP2 is about twenty times higher than that of MEP1. MEP3 has the lowest affinity. Under ammonium limitation acts as an ammonium sensor, generating a signal that leads to pseudohyphal (filamentous) growth. The polypeptide is Ammonium transporter MEP2 (Saccharomyces cerevisiae (strain ATCC 204508 / S288c) (Baker's yeast)).